The sequence spans 524 residues: Cytochrome P450 monooxygenase patH (524 aa).

Residues Met1 to Phe4 lie on the Cytoplasmic side of the membrane. A helical membrane pass occupies residues Leu5–Phe22. The Lumenal segment spans residues Thr23–Gly524. Asn266 carries N-linked (GlcNAc...) asparagine glycosylation. A heme-binding site is contributed by Cys442.

Belongs to the cytochrome P450 family. Heme is required as a cofactor.

Its subcellular location is the endoplasmic reticulum membrane. It carries out the reaction 3-methylphenol + reduced [NADPH--hemoprotein reductase] + O2 = 3-hydroxybenzyl alcohol + oxidized [NADPH--hemoprotein reductase] + H2O + H(+). Its pathway is mycotoxin biosynthesis; patulin biosynthesis. Cytochrome P450 monooxygenase; part of the gene cluster that mediates the biosynthesis of patulin, an acetate-derived tetraketide mycotoxin produced by several fungal species that shows antimicrobial properties against several bacteria. PatH catalyzes the conversion of m-cresol into m-hydroxybenzyl alcohol. The pathway begins with the synthesis of 6-methylsalicylic acid by the polyketide synthase (PKS) patK via condensation of acetate and malonate units. The 6-methylsalicylic acid decarboxylase patG then catalyzes the decarboxylation of 6-methylsalicylic acid to yield m-cresol (also known as 3-methylphenol). These first reactions occur in the cytosol. The intermediate m-cresol is then transported into the endoplasmic reticulum where the cytochrome P450 monooxygenase patH converts it to m-hydroxybenzyl alcohol, which is further converted to gentisyl alcohol by the cytochrome P450 monooxygenase patI. The oxidoreductases patJ and patO further convert gentisyl alcohol to isoepoxydon in the vacuole. PatN catalyzes then the transformation of isoepoxydon into phyllostine. The cluster protein patF is responsible for the conversion from phyllostine to neopatulin whereas the alcohol dehydrogenase patD converts neopatulin to E-ascladiol. The steps between isoepoxydon and E-ascladiol occur in the cytosol, and E-ascladiol is probably secreted to the extracellular space by one of the cluster-specific transporters patC or patM. Finally, the secreted patulin synthase patE catalyzes the conversion of E-ascladiol to patulin. The protein is Cytochrome P450 monooxygenase patH of Penicillium expansum (Blue mold rot fungus).